Here is a 251-residue protein sequence, read N- to C-terminus: MTRLTVLALLAGLLASSRAGSSPLLDIVGGRKARPRQFPFLASIQNQGRHFCGGALIHARFVMTAASCFQSQNPGVSTVVLGAYDLRRRERQSRQTFSISSMSENGYDPQQNLNDLMLLQLDREANLTSSVTILPLPLQNATVEAGTRCQVAGWGSQRSGGRLSRFPRFVNVTVTPEDQCRPNNVCTGVLTRRGGICNGDGGTPLVCEGLAHGVASFSLGPCGRGPDFFTRVALFRDWIDGVLNNPGPGPA.

The first 19 residues, 1–19, serve as a signal peptide directing secretion; the sequence is MTRLTVLALLAGLLASSRA. The propeptide at 20–26 is removed in mature form; it reads GSSPLLD. Residues 25–26 constitute a propeptide, dipeptide found in non-mature form; sequence LD. The Peptidase S1 domain occupies 27 to 244; the sequence is IVGGRKARPR…FRDWIDGVLN (218 aa). The segment at 46 to 70 is possesses antibiotic activity; it reads NQGRHFCGGALIHARFVMTAASCFQ. Cysteine 52 and cysteine 68 are disulfide-bonded. An N-linked (GlcNAc...) asparagine; partial glycan is attached at asparagine 126. Asparagine 140 carries N-linked (GlcNAc...) asparagine glycosylation. Intrachain disulfides connect cysteine 149/cysteine 207, cysteine 180/cysteine 186, and cysteine 197/cysteine 222. Residue asparagine 171 is glycosylated (N-linked (GlcNAc...) asparagine; partial). Positions 249–251 are cleaved as a propeptide — removed in mature form; that stretch reads GPA.

This sequence belongs to the peptidase S1 family. Elastase subfamily. In terms of processing, cleavage of the N-terminal propeptide which is composed of 7 amino acids occurs in two steps. The initial cleavage of 5 amino acids is followed by the cleavage of a dipeptide to produce the mature form.

Its subcellular location is the cytoplasmic granule membrane. In terms of biological role, this is a neutrophil granule-derived antibacterial and monocyte- and fibroblast-specific chemotactic glycoprotein. Binds heparin. The cytotoxic action is limited to many species of Gram-negative bacteria; this specificity may be explained by a strong affinity of the very basic N-terminal half for the negatively charged lipopolysaccharides that are unique to the Gram-negative bacterial outer envelope. It may play a role in mediating recruitment of monocytes in the second wave of inflammation. Has antibacterial activity against the Gram-negative bacterium P.aeruginosa, this activity is inhibited by LPS from P.aeruginosa. Acting alone, it does not have antimicrobial activity against the Gram-negative bacteria A.actinomycetemcomitans ATCC 29532, A.actinomycetemcomitans NCTC 9709, A.actinomycetemcomitans FDC-Y4, H.aphrophilus ATCC 13252, E.corrodens ATCC 23834, C.sputigena ATCC 33123, Capnocytophaga sp ATCC 33124, Capnocytophaga sp ATCC 27872 or E.coli ML-35. Has antibacterial activity against C.sputigena ATCC 33123 when acting synergistically with either elastase or cathepsin G. This is Azurocidin from Homo sapiens (Human).